Here is a 104-residue protein sequence, read N- to C-terminus: Pyrimidine/purine nucleoside phosphorylase (104 aa).

The protein belongs to the nucleoside phosphorylase PpnP family.

The catalysed reaction is a purine D-ribonucleoside + phosphate = a purine nucleobase + alpha-D-ribose 1-phosphate. The enzyme catalyses adenosine + phosphate = alpha-D-ribose 1-phosphate + adenine. It carries out the reaction cytidine + phosphate = cytosine + alpha-D-ribose 1-phosphate. It catalyses the reaction guanosine + phosphate = alpha-D-ribose 1-phosphate + guanine. The catalysed reaction is inosine + phosphate = alpha-D-ribose 1-phosphate + hypoxanthine. The enzyme catalyses thymidine + phosphate = 2-deoxy-alpha-D-ribose 1-phosphate + thymine. It carries out the reaction uridine + phosphate = alpha-D-ribose 1-phosphate + uracil. It catalyses the reaction xanthosine + phosphate = alpha-D-ribose 1-phosphate + xanthine. Its function is as follows. Catalyzes the phosphorolysis of diverse nucleosides, yielding D-ribose 1-phosphate and the respective free bases. Can use uridine, adenosine, guanosine, cytidine, thymidine, inosine and xanthosine as substrates. Also catalyzes the reverse reactions. The polypeptide is Pyrimidine/purine nucleoside phosphorylase (Pelobacter propionicus (strain DSM 2379 / NBRC 103807 / OttBd1)).